Consider the following 1185-residue polypeptide: Liprin-alpha-4 (1185 aa).

2 coiled-coil regions span residues 24–123 and 165–499; these read ANFE…CLVS and DEKV…GRGG. Disordered regions lie at residues 638–709 and 721–757; these read SASP…RTLR and EEGKSALEDQGSNPSSSNSSQDSLHKGAKRKGIKSSI. Phosphoserine is present on serine 640. Over residues 645-656 the composition is skewed to polar residues; sequence GRSTPKLTSRSA. Serine 681 is subject to Phosphoserine. The span at 684–695 shows a compositional bias: basic and acidic residues; it reads SREENREDKATI. The segment covering 729–742 has biased composition (low complexity); the sequence is DQGSNPSSSNSSQD. SAM domains are found at residues 829–895, 944–1008, and 1032–1101; these read WDGP…MVSL, NHEW…LKRL, and WTND…LLAL.

The protein belongs to the liprin family. Liprin-alpha subfamily. In terms of assembly, forms homodimers and heterodimers with liprins-alpha and liprins-beta. Interacts with the second PTPase domain of PTPRD, PTPRF and PTPRS. Interacts with RIMS1 and RIMS2. Interacts with GIT1 and GIT2. Interacts with GRIP1. Interacts with KIF1A. As to expression, expressed only in the heart, brain, and skeletal muscle.

It is found in the cytoplasm. The protein resides in the cell surface. In terms of biological role, may regulate the disassembly of focal adhesions. May localize receptor-like tyrosine phosphatases type 2A at specific sites on the plasma membrane, possibly regulating their interaction with the extracellular environment and their association with substrates. This chain is Liprin-alpha-4 (PPFIA4), found in Homo sapiens (Human).